Here is a 356-residue protein sequence, read N- to C-terminus: Aminodeoxyfutalosine deaminase (356 aa).

The Zn(2+) site is built by H18 and H20. Substrate-binding residues include R73, E140, and G172. H199 is a Zn(2+) binding site. E202 (proton donor) is an active-site residue. Residue D287 participates in Zn(2+) binding.

It belongs to the metallo-dependent hydrolases superfamily. Adenosine and AMP deaminases family. Zn(2+) is required as a cofactor.

The enzyme catalyses 6-amino-6-deoxyfutalosine + H2O + H(+) = futalosine + NH4(+). It functions in the pathway quinol/quinone metabolism; menaquinone biosynthesis. In terms of biological role, catalyzes the deamination of aminodeoxyfutalosine (AFL) into futalosine (FL), a step in the biosynthesis of menaquinone (MK, vitamin K2). Is very poorly efficient on 1-(6-amino-9H-purin-9-yl)-1-deoxy-N-ethyl-beta-D-ribofuranuronamide (NECA), adenosine, 5'-methylthioadenosine, 5'-deoxyadenosine, 2'-deoxyadenosine, and AMP as substrate. The sequence is that of Aminodeoxyfutalosine deaminase from Acidothermus cellulolyticus (strain ATCC 43068 / DSM 8971 / 11B).